A 227-amino-acid polypeptide reads, in one-letter code: Uracil-DNA glycosylase (227 aa).

Asp-68 acts as the Proton acceptor in catalysis.

It belongs to the uracil-DNA glycosylase (UDG) superfamily. UNG family.

It localises to the cytoplasm. The enzyme catalyses Hydrolyzes single-stranded DNA or mismatched double-stranded DNA and polynucleotides, releasing free uracil.. Functionally, excises uracil residues from the DNA which can arise as a result of misincorporation of dUMP residues by DNA polymerase or due to deamination of cytosine. In Mycobacterium ulcerans (strain Agy99), this protein is Uracil-DNA glycosylase.